The chain runs to 296 residues: Thioredoxin-related transmembrane protein 2 (296 aa).

Positions 1–48 (MAVLAPLIALVYSVPRLSRWLAQPYYLLSALLSAAFLLVRKLPPLCHG) are cleaved as a signal peptide. Topologically, residues 49–102 (LPTQREDGNPCDFDWREVEILMFLSAIVMMKNRRSITVEQHIGNIFMFSKVANA) are extracellular. A helical membrane pass occupies residues 103–125 (ILFFRLDIRMGLLYITLCIVFLM). The 156-residue stretch at 114–269 (LLYITLCIVF…LYQRAKKLSK (156 aa)) folds into the Thioredoxin domain. The Cytoplasmic portion of the chain corresponds to 126–296 (TCKPPLYMGP…VSDGESKKDK (171 aa)). Phosphoserine is present on residues Ser211, Ser243, and Ser288. Residues 269 to 296 (KAGDNIPEEQPVAPTPTRVSDGESKKDK) are disordered. A Di-lysine motif motif is present at residues 293 to 296 (KKDK).

In terms of assembly, monomer. Homodimer; disulfide-linked. Occurs in both reduced and oxidized monomeric form. Oxidative conditions increase homodimerization. Interacts with CANX. Interacts with ATP2A2.

It is found in the endoplasmic reticulum membrane. Its subcellular location is the mitochondrion membrane. Functionally, endoplasmic reticulum and mitochondria-associated protein that probably functions as a regulator of cellular redox state and thereby regulates protein post-translational modification, protein folding and mitochondrial activity. Indirectly regulates neuronal proliferation, migration, and organization in the developing brain. The chain is Thioredoxin-related transmembrane protein 2 (TMX2) from Macaca fascicularis (Crab-eating macaque).